We begin with the raw amino-acid sequence, 111 residues long: uncharacterized protein (111 aa).

Belongs to the asfivirus E111R family.

This is an uncharacterized protein from Ornithodoros (relapsing fever ticks).